We begin with the raw amino-acid sequence, 68 residues long: MQVYQCCEAIRIAYNQIGSGEQGYVPQAIAATIRALNAVASDERVPADLREQAAYAAANLLISDHEDA.

Belongs to the UPF0253 family.

The polypeptide is UPF0253 protein AHA_2115 (Aeromonas hydrophila subsp. hydrophila (strain ATCC 7966 / DSM 30187 / BCRC 13018 / CCUG 14551 / JCM 1027 / KCTC 2358 / NCIMB 9240 / NCTC 8049)).